A 371-amino-acid chain; its full sequence is Cytochrome b (371 aa).

4 helical membrane passes run 32–52 (VGFS…CLAW), 76–98 (FVIR…VHIF), 113–133 (VWAV…IGYV), and 179–199 (LHVL…MHLF). 2 residues coordinate heme b: histidine 82 and histidine 96. Positions 183 and 197 each coordinate heme b. An a ubiquinone-binding site is contributed by histidine 202. 4 consecutive transmembrane segments (helical) span residues 227–247 (FYLR…YFIF), 296–316 (LMVI…LWFV), 329–349 (LILF…ILAY), and 350–370 (PIWM…VCRL).

This sequence belongs to the cytochrome b family. In terms of assembly, the main subunits of complex b-c1 are: cytochrome b, cytochrome c1 and the Rieske protein. It depends on heme b as a cofactor.

It localises to the mitochondrion inner membrane. Functionally, component of the ubiquinol-cytochrome c reductase complex (complex III or cytochrome b-c1 complex) that is part of the mitochondrial respiratory chain. The b-c1 complex mediates electron transfer from ubiquinol to cytochrome c. Contributes to the generation of a proton gradient across the mitochondrial membrane that is then used for ATP synthesis. This Leishmania tarentolae (Sauroleishmania tarentolae) protein is Cytochrome b (MT-CYB).